The following is a 547-amino-acid chain: Chaperonin GroEL (547 aa).

ATP contacts are provided by residues 30-33 (TLGP), K51, 87-91 (DGTTT), G415, and D496.

It belongs to the chaperonin (HSP60) family. Forms a cylinder of 14 subunits composed of two heptameric rings stacked back-to-back. Interacts with the co-chaperonin GroES.

The protein localises to the cytoplasm. The enzyme catalyses ATP + H2O + a folded polypeptide = ADP + phosphate + an unfolded polypeptide.. Together with its co-chaperonin GroES, plays an essential role in assisting protein folding. The GroEL-GroES system forms a nano-cage that allows encapsulation of the non-native substrate proteins and provides a physical environment optimized to promote and accelerate protein folding. This Chlorobaculum parvum (strain DSM 263 / NCIMB 8327) (Chlorobium vibrioforme subsp. thiosulfatophilum) protein is Chaperonin GroEL.